A 287-amino-acid chain; its full sequence is Ribosomal RNA small subunit methyltransferase A (287 aa).

S-adenosyl-L-methionine-binding residues include asparagine 35, valine 37, glycine 62, glutamate 83, aspartate 113, and asparagine 131.

The protein belongs to the class I-like SAM-binding methyltransferase superfamily. rRNA adenine N(6)-methyltransferase family. RsmA subfamily.

It localises to the cytoplasm. The catalysed reaction is adenosine(1518)/adenosine(1519) in 16S rRNA + 4 S-adenosyl-L-methionine = N(6)-dimethyladenosine(1518)/N(6)-dimethyladenosine(1519) in 16S rRNA + 4 S-adenosyl-L-homocysteine + 4 H(+). Functionally, specifically dimethylates two adjacent adenosines (A1518 and A1519) in the loop of a conserved hairpin near the 3'-end of 16S rRNA in the 30S particle. May play a critical role in biogenesis of 30S subunits. This chain is Ribosomal RNA small subunit methyltransferase A, found in Thermobifida fusca (strain YX).